A 507-amino-acid polypeptide reads, in one-letter code: UDP-N-acetylhexosamine pyrophosphorylase-like protein 1 (507 aa).

A disordered region spans residues 56 to 91 (ACARPHGPPPDLAARLRPLPPERVGRASRSDPETRR). Residues 78–91 (RVGRASRSDPETRR) show a composition bias toward basic and acidic residues. A Substrate binding motif is present at residues 111–114 (LAGG). UTP contacts are provided by residues 111 to 114 (LAGG), Lys-125, Gln-199, and Gly-225. Asn-226 serves as a coordination point for substrate. Asp-256 contacts UTP. A Substrate binding motif is present at residues 306 to 307 (EY). Residue Lys-380 participates in UTP binding. Residue Lys-410 participates in substrate binding.

The protein belongs to the UDPGP type 1 family.

The sequence is that of UDP-N-acetylhexosamine pyrophosphorylase-like protein 1 (UAP1L1) from Homo sapiens (Human).